An 84-amino-acid chain; its full sequence is Toxin To10 (84 aa).

The first 19 residues, 1–19 (MNYSTLIAVASLLTAGTES), serve as a signal peptide directing secretion. One can recognise an LCN-type CS-alpha/beta domain in the interval 21–80 (KDGYPVEGSCAFPCGYDNAYCDKLCKERKADSGYCYWVNILCYCYGLPDNAAIKGYGRCK). 4 disulfide bridges follow: C30–C79, C34–C55, C41–C62, and C45–C64. P81 carries the post-translational modification Proline amide.

The protein belongs to the long (4 C-C) scorpion toxin superfamily. Sodium channel inhibitor family. Alpha subfamily. As to expression, expressed by the venom gland.

The protein resides in the secreted. Alpha toxins bind voltage-independently at site-3 of sodium channels (Nav) and inhibit the inactivation of the activated channels, thereby blocking neuronal transmission. The chain is Toxin To10 from Tityus obscurus (Amazonian scorpion).